The following is a 308-amino-acid chain: Cell division protein ZipA (308 aa).

Topologically, residues 1 to 5 (MQELR) are periplasmic. Residues 6–26 (LVLILVGALAIAALLFHGLWT) form a helical membrane-spanning segment. The Cytoplasmic portion of the chain corresponds to 27–308 (SRKETSSKFG…YKQRVKVFCN (282 aa)). Residues 43-90 (FDSESEDEQPTPARGFEQPKESVVDVRQERKEPAFGRDEPNLSQDPLF) are disordered. Positions 59-82 (EQPKESVVDVRQERKEPAFGRDEP) are enriched in basic and acidic residues.

Belongs to the ZipA family. In terms of assembly, interacts with FtsZ via their C-terminal domains.

It localises to the cell inner membrane. In terms of biological role, essential cell division protein that stabilizes the FtsZ protofilaments by cross-linking them and that serves as a cytoplasmic membrane anchor for the Z ring. Also required for the recruitment to the septal ring of downstream cell division proteins. The polypeptide is Cell division protein ZipA (Aliivibrio salmonicida (strain LFI1238) (Vibrio salmonicida (strain LFI1238))).